The following is a 433-amino-acid chain: Serine/threonine-protein kinase DCLK1 (433 aa).

A disordered region spans residues Met1–Gln74. Phosphoserine is present on residues Ser23, Ser25, Ser27, Ser30, Ser40, Ser45, Ser46, Ser48, Ser57, and Ser69. Residues Ser40–Ser57 are compositionally biased toward low complexity. Residues Asp59–Glu71 are compositionally biased toward acidic residues. Positions Tyr83–Val340 constitute a Protein kinase domain. Residues Ile89 to Val97 and Lys112 each bind ATP. Asp204 functions as the Proton acceptor in the catalytic mechanism. Phosphotyrosine is present on Tyr213. Positions Gln388 to Gly400 are enriched in basic and acidic residues. The interval Gln388 to Phe433 is disordered. Ser419, Ser428, and Ser431 each carry phosphoserine.

It belongs to the protein kinase superfamily. CAMK Ser/Thr protein kinase family. CaMK subfamily.

It catalyses the reaction L-seryl-[protein] + ATP = O-phospho-L-seryl-[protein] + ADP + H(+). The enzyme catalyses L-threonyl-[protein] + ATP = O-phospho-L-threonyl-[protein] + ADP + H(+). Probable kinase that may be involved in a calcium-signaling pathway controlling neuronal migration in the developing brain. May also participate in functions of the mature nervous system. The chain is Serine/threonine-protein kinase DCLK1 (Dclk1) from Rattus norvegicus (Rat).